Reading from the N-terminus, the 102-residue chain is Guanyl-specific ribonuclease Pc (102 aa).

Disulfide bonds link Cys2–Cys10 and Cys6–Cys101. His38 is an active-site residue. The active-site Proton acceptor is Glu56. Residue His90 is the Proton donor of the active site.

The protein belongs to the ribonuclease N1/T1 family.

The enzyme catalyses [RNA] containing guanosine + H2O = an [RNA fragment]-3'-guanosine-3'-phosphate + a 5'-hydroxy-ribonucleotide-3'-[RNA fragment].. In Penicillium chrysogenum (Penicillium notatum), this protein is Guanyl-specific ribonuclease Pc.